A 413-amino-acid polypeptide reads, in one-letter code: ORC1-type DNA replication protein 2 (413 aa).

ATP contacts are provided by residues Thr70–Ala74, Tyr217, and Arg229.

It belongs to the CDC6/cdc18 family. As to quaternary structure, monomer. Interacts with Cdc6-3, MCM and PolB1. In terms of processing, autophosphorylated in vitro.

In terms of biological role, involved in regulation of DNA replication. May play essential roles in origin recognition and cell cycle control of replication. Binds both single-stranded and double-stranded DNA, with a preference for molecules that contain a bubble, a fork, or a tail. Has a weak ATPase activity. Stimulates the binding of the MCM helicase to the origin DNA, but strongly inhibits ATPase and DNA helicase activities of MCM. Also regulates the DNA polymerase and the nuclease activities of PolB1. The chain is ORC1-type DNA replication protein 2 (cdc6-2) from Saccharolobus solfataricus (strain ATCC 35092 / DSM 1617 / JCM 11322 / P2) (Sulfolobus solfataricus).